Consider the following 303-residue polypeptide: Tobamovirus multiplication protein 3 (303 aa).

Over 1–48 the chain is Extracellular; the sequence is MRIGGVEVTKFASEMMSSSSSSAVEMLNLKEASNWWSDVNESPIWQDR. Residues 49–69 traverse the membrane as a helical segment; sequence IFHVLAVLYGIVSLVAVIQLV. Residues 70–82 lie on the Cytoplasmic side of the membrane; the sequence is RIQLRVPEYGWTT. Residues 83 to 103 form a helical membrane-spanning segment; the sequence is QKVFHFLNFVVNGVRAVVFVF. Residues 104–117 are Extracellular-facing; the sequence is RRNVQFMQPEILQH. A helical membrane pass occupies residues 118–138; that stretch reads ILLDIPSLAFFTTYALLVLFW. Residues 139-156 are Cytoplasmic-facing; it reads AEIYYQARAVSTDGLRPS. Residues 157 to 177 form a helical membrane-spanning segment; that stretch reads FFTINAVVYVVQIALWLVLWW. Residues 178–183 are Extracellular-facing; it reads KPVRVM. Residues 184 to 204 form a helical membrane-spanning segment; it reads VILSKMFFAGVSLFAALGFLL. Topologically, residues 205 to 232 are cytoplasmic; it reads YGGRLFLMLQRFPVESKGRRKKLQEVGY. A helical membrane pass occupies residues 233–253; that stretch reads VTTICFTCFLIRCIMMCFAAF. Over 254 to 265 the chain is Extracellular; sequence DEGANLDVLDHP. The chain crosses the membrane as a helical span at residues 266–286; it reads ILNFIYYLLVEILPSSLVLFI. Topologically, residues 287–303 are cytoplasmic; that stretch reads LRKLPPKRGITQYHQIR.

It belongs to the plant tobamovirus multiplication TOM1 protein family. As to quaternary structure, constituent of tobamovirus replication complex. Interacts with the helicase domain of tobamovirus-encoded replication proteins.

The protein localises to the vacuole membrane. Its function is as follows. Contributes to the intracellular multiplication of tobamoviruses, probably being a membrane anchor promoting the formation of the replication complex. This chain is Tobamovirus multiplication protein 3 (TOM3), found in Arabidopsis thaliana (Mouse-ear cress).